We begin with the raw amino-acid sequence, 184 residues long: ATP synthase subunit b (184 aa).

A helical membrane pass occupies residues 25–45 (IFPSWPIMLATLVSFTILLVV).

The protein belongs to the ATPase B chain family. As to quaternary structure, F-type ATPases have 2 components, F(1) - the catalytic core - and F(0) - the membrane proton channel. F(1) has five subunits: alpha(3), beta(3), gamma(1), delta(1), epsilon(1). F(0) has three main subunits: a(1), b(2) and c(10-14). The alpha and beta chains form an alternating ring which encloses part of the gamma chain. F(1) is attached to F(0) by a central stalk formed by the gamma and epsilon chains, while a peripheral stalk is formed by the delta and b chains.

It localises to the cell membrane. In terms of biological role, f(1)F(0) ATP synthase produces ATP from ADP in the presence of a proton or sodium gradient. F-type ATPases consist of two structural domains, F(1) containing the extramembraneous catalytic core and F(0) containing the membrane proton channel, linked together by a central stalk and a peripheral stalk. During catalysis, ATP synthesis in the catalytic domain of F(1) is coupled via a rotary mechanism of the central stalk subunits to proton translocation. Its function is as follows. Component of the F(0) channel, it forms part of the peripheral stalk, linking F(1) to F(0). The polypeptide is ATP synthase subunit b (Mycoplasma mobile (strain ATCC 43663 / 163K / NCTC 11711) (Mesomycoplasma mobile)).